A 373-amino-acid polypeptide reads, in one-letter code: uncharacterized protein (373 aa).

A helical membrane pass occupies residues tyrosine 180–tryptophan 202.

It localises to the membrane. This is an uncharacterized protein from Rickettsia prowazekii (strain Madrid E).